A 108-amino-acid polypeptide reads, in one-letter code: Nucleoid-associated protein Bmul_1447/BMULJ_01796 (108 aa).

Residues 84 to 108 (EATSQEKMSGMTSGLPLPPGFKLPF) are disordered. Residues 85–95 (ATSQEKMSGMT) are compositionally biased toward polar residues. Residues 99–108 (PLPPGFKLPF) are compositionally biased toward pro residues.

This sequence belongs to the YbaB/EbfC family. In terms of assembly, homodimer.

Its subcellular location is the cytoplasm. It localises to the nucleoid. In terms of biological role, binds to DNA and alters its conformation. May be involved in regulation of gene expression, nucleoid organization and DNA protection. The chain is Nucleoid-associated protein Bmul_1447/BMULJ_01796 from Burkholderia multivorans (strain ATCC 17616 / 249).